The sequence spans 239 residues: tRNA1(Val) (adenine(37)-N6)-methyltransferase (239 aa).

The protein belongs to the methyltransferase superfamily. tRNA (adenine-N(6)-)-methyltransferase family.

It localises to the cytoplasm. The catalysed reaction is adenosine(37) in tRNA1(Val) + S-adenosyl-L-methionine = N(6)-methyladenosine(37) in tRNA1(Val) + S-adenosyl-L-homocysteine + H(+). In terms of biological role, specifically methylates the adenine in position 37 of tRNA(1)(Val) (anticodon cmo5UAC). This is tRNA1(Val) (adenine(37)-N6)-methyltransferase from Vibrio parahaemolyticus serotype O3:K6 (strain RIMD 2210633).